We begin with the raw amino-acid sequence, 1018 residues long: Serine/threonine-protein kinase 31 (1018 aa).

The 60-residue stretch at 78–137 folds into the Tudor domain; the sequence is NLDPKKIYGGLFSEDKCWYRCKVLKTISDDKCLVRYIDYGNTEILNRSDIVEIPPELQFS. Residues 298–358 are a coiled coil; it reads AKIKQDQKLI…TKHLESTLKT (61 aa). The Protein kinase domain occupies 711 to 1018; the sequence is IGLLKYMNSG…EKTRNGEANP (308 aa). ATP is bound by residues 717-725 and K738; that span reads MNSGGLLTM. Positions 988–1018 are disordered; that stretch reads IECTQHSREDESKMESLDRYSEKTRNGEANP.

The protein belongs to the protein kinase superfamily. Ser/Thr protein kinase family. Testis specific. Expressed only in male germ cells.

It carries out the reaction L-seryl-[protein] + ATP = O-phospho-L-seryl-[protein] + ADP + H(+). It catalyses the reaction L-threonyl-[protein] + ATP = O-phospho-L-threonyl-[protein] + ADP + H(+). The polypeptide is Serine/threonine-protein kinase 31 (Stk31) (Mus musculus (Mouse)).